Consider the following 158-residue polypeptide: 2-C-methyl-D-erythritol 2,4-cyclodiphosphate synthase (158 aa).

A divalent metal cation is bound by residues Asp-8 and His-10. 4-CDP-2-C-methyl-D-erythritol 2-phosphate-binding positions include 8-10 (DVH) and 34-35 (HS). His-42 is an a divalent metal cation binding site. 4-CDP-2-C-methyl-D-erythritol 2-phosphate-binding positions include 56–58 (DIG), 61–65 (FPDTD), 100–106 (AQVPKMA), 132–135 (TTTE), Phe-139, and Arg-142.

The protein belongs to the IspF family. As to quaternary structure, homotrimer. A divalent metal cation serves as cofactor.

It catalyses the reaction 4-CDP-2-C-methyl-D-erythritol 2-phosphate = 2-C-methyl-D-erythritol 2,4-cyclic diphosphate + CMP. The protein operates within isoprenoid biosynthesis; isopentenyl diphosphate biosynthesis via DXP pathway; isopentenyl diphosphate from 1-deoxy-D-xylulose 5-phosphate: step 4/6. In terms of biological role, involved in the biosynthesis of isopentenyl diphosphate (IPP) and dimethylallyl diphosphate (DMAPP), two major building blocks of isoprenoid compounds. Catalyzes the conversion of 4-diphosphocytidyl-2-C-methyl-D-erythritol 2-phosphate (CDP-ME2P) to 2-C-methyl-D-erythritol 2,4-cyclodiphosphate (ME-CPP) with a corresponding release of cytidine 5-monophosphate (CMP). The polypeptide is 2-C-methyl-D-erythritol 2,4-cyclodiphosphate synthase (Sodalis glossinidius (strain morsitans)).